Here is a 228-residue protein sequence, read N- to C-terminus: MNNAIRIMDLPENERPREKLTRYGVESLSNIELLALILRTGNKSENVISLCARILERCGGLNGLFNANRGELLNINGVGEAKASQILALLELTKRFRSFKSGENYNITNPKDAAYLVMEEMRWLKQEYLKVILLNTKNYVIKVKDVFIGSLNSSIVHPREIFLEAIKNNSYSIIICHNHPSGDTTPSKEDINVSNRIKECGKLIGIELLDHIIIGNGVYISLKEKDIL.

The 123-residue stretch at 106–228 (NITNPKDAAY…YISLKEKDIL (123 aa)) folds into the MPN domain. Residues H177, H179, and D190 each contribute to the Zn(2+) site. The short motif at 177-190 (HNHPSGDTTPSKED) is the JAMM motif element.

The protein belongs to the UPF0758 family.

This chain is UPF0758 protein CTC_02075, found in Clostridium tetani (strain Massachusetts / E88).